A 602-amino-acid chain; its full sequence is Elongation factor 4 (602 aa).

One can recognise a tr-type G domain in the interval 7 to 188 (ENIRNFSIIA…SIIRLVPPPK (182 aa)). GTP-binding positions include 19 to 24 (DHGKST) and 135 to 138 (NKID).

It belongs to the TRAFAC class translation factor GTPase superfamily. Classic translation factor GTPase family. LepA subfamily.

It localises to the cell inner membrane. The enzyme catalyses GTP + H2O = GDP + phosphate + H(+). Required for accurate and efficient protein synthesis under certain stress conditions. May act as a fidelity factor of the translation reaction, by catalyzing a one-codon backward translocation of tRNAs on improperly translocated ribosomes. Back-translocation proceeds from a post-translocation (POST) complex to a pre-translocation (PRE) complex, thus giving elongation factor G a second chance to translocate the tRNAs correctly. Binds to ribosomes in a GTP-dependent manner. The protein is Elongation factor 4 of Chlamydia trachomatis serovar D (strain ATCC VR-885 / DSM 19411 / UW-3/Cx).